A 295-amino-acid chain; its full sequence is MELIQDTSRPPLEYVKGVPLIKYFAEALGPLQSFQARPDDLLISTYPKSGTTWVSQILDMIYQGGDLEKCHRAPIFMRVPFLEFKAPGIPSGMETLKDTPAPRLLKTHLPLALLPQTLLDQKVKVVYVARNAKDVAVSYYHFYHMAKVHPEPGTWDSFLEKFMVGEVSYGSWYQHVQEWWELSRTHPVLYLFYEDMKENPKREIQKILEFVGRSLPEETVDFVVQHTSFKEMKKNPMTNYTTVPQEFMDHSISPFMRKGMAGDWKTTFTVAQNERFDADYAEKMAGCSLSFRSEL.

48–53 (KSGTTW) is a binding site for 3'-phosphoadenylyl sulfate. Substrate is bound at residue 106–108 (KTH). Residue H108 is the Proton acceptor of the active site. Residues R130, S138, Y193, 227–232 (TSFKEM), and 255–259 (FMRKG) each bind 3'-phosphoadenylyl sulfate. S138 carries the post-translational modification Phosphoserine.

This sequence belongs to the sulfotransferase 1 family. In terms of assembly, homodimer. Liver, lung, adrenal, brain, platelets and skin.

The protein localises to the cytoplasm. The enzyme catalyses a phenol + 3'-phosphoadenylyl sulfate = an aryl sulfate + adenosine 3',5'-bisphosphate + H(+). The catalysed reaction is 17beta-estradiol + 3'-phosphoadenylyl sulfate = 17beta-estradiol 3-sulfate + adenosine 3',5'-bisphosphate + H(+). It carries out the reaction 4-ethylphenol + 3'-phosphoadenylyl sulfate = 4-ethylphenyl sulfate + adenosine 3',5'-bisphosphate + H(+). It catalyses the reaction 4-nitrophenol + 3'-phosphoadenylyl sulfate = 4-nitrophenyl sulfate + adenosine 3',5'-bisphosphate. The enzyme catalyses dopamine + 3'-phosphoadenylyl sulfate = dopamine 3-O-sulfate + adenosine 3',5'-bisphosphate + H(+). The catalysed reaction is dopamine + 3'-phosphoadenylyl sulfate = dopamine 4-O-sulfate + adenosine 3',5'-bisphosphate + H(+). It carries out the reaction 3,3',5-triiodo-L-thyronine + 3'-phosphoadenylyl sulfate = 3,3',5-triiodo-L-thyronine sulfate + adenosine 3',5'-bisphosphate + H(+). It catalyses the reaction 3,3',5'-triiodo-L-thyronine + 3'-phosphoadenylyl sulfate = 3,3',5'-triiodo-L-thyronine sulfate + adenosine 3',5'-bisphosphate + H(+). The enzyme catalyses 3,3'-diiodo-L-thyronine + 3'-phosphoadenylyl sulfate = 3,3'-diiodo-L-thyronine sulfate + adenosine 3',5'-bisphosphate + H(+). The catalysed reaction is L-thyroxine + 3'-phosphoadenylyl sulfate = L-thyroxine sulfate + adenosine 3',5'-bisphosphate + H(+). Its function is as follows. Sulfotransferase that utilizes 3'-phospho-5'-adenylyl sulfate (PAPS) as sulfonate donor to catalyze the sulfate conjugation of a wide variety of acceptor molecules bearing a hydroxyl or an amine group. Sulfonation increases the water solubility of most compounds, and therefore their renal excretion, but it can also result in bioactivation to form active metabolites. Displays broad substrate specificity for small phenolic compounds. Plays an important role in the sulfonation of endogenous molecules such as steroid hormones. Mediates the sulfate conjugation of a variety of xenobiotics, including the drugs acetaminophen and minoxidil. Mediates also the metabolic activation of carcinogenic N-hydroxyarylamines leading to highly reactive intermediates capable of forming DNA adducts, potentially resulting in mutagenesis. May play a role in gut microbiota-host metabolic interaction. O-sulfonates 4-ethylphenol (4-EP), a dietary tyrosine-derived metabolite produced by gut bacteria. The product 4-EPS crosses the blood-brain barrier and may negatively regulate oligodendrocyte maturation and myelination, affecting the functional connectivity of different brain regions associated with the limbic system. Catalyzes the sulfate conjugation of dopamine. Catalyzes the sulfation of T4 (L-thyroxine/3,5,3',5'-tetraiodothyronine), T3 (3,5,3'-triiodothyronine), rT3 (3,3',5'-triiodothyronine) and 3,3'-T2 (3,3'-diiodothyronine), with a substrate preference of 3,3'-T2 &gt; rT3 &gt; T3 &gt; T4. This is Sulfotransferase 1A1 (SULT1A1) from Homo sapiens (Human).